Here is a 691-residue protein sequence, read N- to C-terminus: Protein phosphatase 1 regulatory subunit 37 (691 aa).

The interval 1–43 (MEIAPQEAPPVPGADGDIEEAPAEAGSPSPASPPADGRLKAAA) is disordered. Residues Ser-50 and Ser-56 each carry the phosphoserine modification. LRR repeat units follow at residues 220-240 (SLAV…MLLA), 248-269 (NLRE…AQLG), 277-297 (SLQI…AYIC), 306-326 (GLVT…AFLG), and 334-354 (SLET…RHLK). Positions 460-662 (EREEKEQPPQ…PEVKGGSCGL (203 aa)) are disordered. The span at 468 to 481 (PQLSASMPETTATE) shows a compositional bias: polar residues. The segment covering 505–523 (SDSDSDSDGEEEEEEEGER) has biased composition (acidic residues). Residue Ser-561 is modified to Phosphoserine. 2 stretches are compositionally biased toward pro residues: residues 584-605 (PASP…PSLP) and 620-634 (PQPP…PPLP).

The protein belongs to the PPP1R37 family. As to quaternary structure, interacts with PPP1CA.

Inhibits phosphatase activity of protein phosphatase 1 (PP1) complexes. The sequence is that of Protein phosphatase 1 regulatory subunit 37 (PPP1R37) from Homo sapiens (Human).